The chain runs to 95 residues: Small ribosomal subunit protein uS17 (95 aa).

It belongs to the universal ribosomal protein uS17 family. Part of the 30S ribosomal subunit.

Its function is as follows. One of the primary rRNA binding proteins, it binds specifically to the 5'-end of 16S ribosomal RNA. The sequence is that of Small ribosomal subunit protein uS17 from Mesomycoplasma hyopneumoniae (strain 7448) (Mycoplasma hyopneumoniae).